Here is a 295-residue protein sequence, read N- to C-terminus: Trimeric intracellular cation channel type 1B.1 (295 aa).

The Lumenal portion of the chain corresponds to 1–27 (MVVPESFQLDQEILLDAGAQLHRLKMY). Residues 28–45 (PYFDVAHYLLMIIEVRDD) traverse the membrane as a helical segment. Residues 46–56 (LGSAASIFSRK) are Cytoplasmic-facing. The discontinuously helical transmembrane segment at 57 to 80 (HPLSCWLSSMLMCFADAFLANFLL) threads the bilayer. The Lumenal portion of the chain corresponds to 81–89 (GEPVIAPFK). A helical transmembrane segment spans residues 90 to 107 (RHDDIILATIIWYLVFYA). Residues 108 to 119 (PFDGIYKIAKIT) are Cytoplasmic-facing. Residues 120 to 148 (PVKCVLAVMKEVKRAYKVSHGVSHAAKLY) form a helical membrane-spanning segment. Residues lysine 129 and arginine 133 each coordinate a 1,2-diacyl-sn-glycero-3-phospho-(1D-myo-inositol-4,5-bisphosphate). Topologically, residues 149 to 150 (PN) are lumenal. A discontinuously helical membrane pass occupies residues 151-177 (SYIVQVLVGTAKGAGSGIVRTLEQLVR). Serine 166 contributes to the a 1,2-diacyl-sn-glycero-3-phospho-(1D-myo-inositol-4,5-bisphosphate) binding site. Over 178 to 188 (GVWLPTHNELL) the chain is Cytoplasmic. A helical transmembrane segment spans residues 189–210 (RPSFATKACVVAASVLALEKSG). Over 211–215 (TYLTA) the chain is Lumenal. Residues 216 to 239 (PHDLVYLVIVGFFVYFKLSAVILH) form a helical membrane-spanning segment. Over 240 to 295 (VTDPFAPIENLFCAIFMGGIWDAVSRALAASRDRRAAGAHSNENGSSISTPEKKDQ) the chain is Cytoplasmic. The disordered stretch occupies residues 274–295 (RAAGAHSNENGSSISTPEKKDQ).

This sequence belongs to the TMEM38 family. In terms of assembly, homotrimer; trimerization probably requires binding to phosphatidylinositol 4,5-bisphosphate (PIP2).

It localises to the endoplasmic reticulum membrane. In terms of biological role, potassium channel that mediates transmembrane potassium transport. Might be required for maintenance of rapid intracellular calcium release. May act as a counter-ion channel that functions in synchronization with calcium release from intracellular stores. Binds phosphatidylinositol 4,5-bisphosphate (PIP2). In Caenorhabditis elegans, this protein is Trimeric intracellular cation channel type 1B.1.